Reading from the N-terminus, the 508-residue chain is MVTLDGSSLTTADVARVLFDFEEAAASEESMERVKKSRAAVERIVRDEKTIYGINTGFGKFSDVLIQKEDSAALQLNLILSHACGVGDPFPECVSRAMLLLRANALLKGFSGVRAELIEQLLAFLNKRVHPVIPQQGSLGASGDLAPLSHLALALIGQGEVFFEGERMPAMTGLKKAGIQPVTLTSKEGLALINGTQAMTAMGVVAYIEAEKLAYQTERIASLTIEGLQGIIDAFDEDIHLARGYQEQIDVAERIRFYLSDSGLTTSQGELRVQDAYSLRCIPQVHGATWQTLGYVKEKLEIEMNAATDNPLIFNDGDKVISGGNFHGQPIAFAMDFLKIAISELANIAERRIERLVNPQLNDLPPFLSPHPGLQSGAMIMQYAAASLVSENKTLAHPASVDSIPSSANQEDHVSMGTIAARHAYQVIANTRRVIAIEAICALQAVEYRGIEHAASYTKQLFQEMRKVVPSIQQDRVFSYDIERLTDWLKKESLIPDHQNKELRGMNI.

The segment at residues 141 to 143 (ASG) is a cross-link (5-imidazolinone (Ala-Gly)). The residue at position 142 (S142) is a 2,3-didehydroalanine (Ser).

This sequence belongs to the PAL/histidase family. Post-translationally, contains an active site 4-methylidene-imidazol-5-one (MIO), which is formed autocatalytically by cyclization and dehydration of residues Ala-Ser-Gly.

The protein resides in the cytoplasm. It carries out the reaction L-histidine = trans-urocanate + NH4(+). It participates in amino-acid degradation; L-histidine degradation into L-glutamate; N-formimidoyl-L-glutamate from L-histidine: step 1/3. This is Histidine ammonia-lyase (hutH) from Bacillus subtilis (strain 168).